The primary structure comprises 444 residues: Xaa-Pro dipeptidase (444 aa).

5 residues coordinate Mn(2+): Asp247, Asp258, His340, Glu385, and Glu424.

It belongs to the peptidase M24B family. Bacterial-type prolidase subfamily. Mn(2+) is required as a cofactor.

The catalysed reaction is Xaa-L-Pro dipeptide + H2O = an L-alpha-amino acid + L-proline. Its function is as follows. Splits dipeptides with a prolyl residue in the C-terminal position. This Proteus mirabilis (strain HI4320) protein is Xaa-Pro dipeptidase.